The chain runs to 92 residues: Small ribosomal subunit protein uS19 (92 aa).

It belongs to the universal ribosomal protein uS19 family.

Its function is as follows. Protein S19 forms a complex with S13 that binds strongly to the 16S ribosomal RNA. In Rhizobium johnstonii (strain DSM 114642 / LMG 32736 / 3841) (Rhizobium leguminosarum bv. viciae), this protein is Small ribosomal subunit protein uS19.